A 285-amino-acid polypeptide reads, in one-letter code: Probable endonuclease 4 (285 aa).

Residues histidine 67, histidine 107, glutamate 144, aspartate 177, histidine 180, histidine 214, aspartate 227, histidine 229, and glutamate 259 each contribute to the Zn(2+) site.

The protein belongs to the AP endonuclease 2 family. It depends on Zn(2+) as a cofactor.

It catalyses the reaction Endonucleolytic cleavage to 5'-phosphooligonucleotide end-products.. Functionally, endonuclease IV plays a role in DNA repair. It cleaves phosphodiester bonds at apurinic or apyrimidinic (AP) sites, generating a 3'-hydroxyl group and a 5'-terminal sugar phosphate. The chain is Probable endonuclease 4 from Persephonella marina (strain DSM 14350 / EX-H1).